Consider the following 173-residue polypeptide: RNA pyrophosphohydrolase (173 aa).

In terms of domain architecture, Nudix hydrolase spans 11–164 (PYRRCVGVVV…KKHVYRKVVS (154 aa)). The Nudix box motif lies at 52–73 (GGIDEGEEPLDAACRELYEETG).

This sequence belongs to the Nudix hydrolase family. RppH subfamily. It depends on a divalent metal cation as a cofactor.

Its function is as follows. Accelerates the degradation of transcripts by removing pyrophosphate from the 5'-end of triphosphorylated RNA, leading to a more labile monophosphorylated state that can stimulate subsequent ribonuclease cleavage. In Bartonella quintana (strain Toulouse) (Rochalimaea quintana), this protein is RNA pyrophosphohydrolase.